Reading from the N-terminus, the 746-residue chain is Transcription factor pbcR (746 aa).

Polar residues predominate over residues 1–12 (MYPWSSTGTSPF). The interval 1-40 (MYPWSSTGTSPFSHPDNEGAESGDMSMGEEQQQPHQRRQK) is disordered. The segment at residues 47–76 (CQSCRASKVRCDQPNPGMPCLRCQKSGKPC) is a DNA-binding region (zn(2)-C6 fungal-type). The disordered stretch occupies residues 109 to 131 (ELQDSAGDGETAHSTALRSPSQL). The span at 120–131 (AHSTALRSPSQL) shows a compositional bias: polar residues.

The protein resides in the nucleus. Its function is as follows. Transcription factor; part of the gene cluster that mediates the biosynthesis of the diterpene ent-pimara-8(14),15-diene (PD). Acts as a positive regulator for the cluster gene. Down-regulates the expression of the penicillin gene cluster, two putative polyketide clusters, and one putative nonribosomal peptide cluster. This is Transcription factor pbcR from Emericella nidulans (strain FGSC A4 / ATCC 38163 / CBS 112.46 / NRRL 194 / M139) (Aspergillus nidulans).